The following is an 888-amino-acid chain: DNA mismatch repair protein MutS (888 aa).

An ATP-binding site is contributed by 641–648; the sequence is GPNMAGKS.

It belongs to the DNA mismatch repair MutS family.

Its function is as follows. This protein is involved in the repair of mismatches in DNA. It is possible that it carries out the mismatch recognition step. This protein has a weak ATPase activity. The chain is DNA mismatch repair protein MutS from Rickettsia bellii (strain RML369-C).